We begin with the raw amino-acid sequence, 207 residues long: Protein GrpE (207 aa).

Residues 1-11 (MTETDGQKDNN) are compositionally biased toward basic and acidic residues. The disordered stretch occupies residues 1–39 (MTETDGQKDNNQDTAQAAADPVVSKPYIMPDDPEEGSNE).

This sequence belongs to the GrpE family. In terms of assembly, homodimer.

It localises to the cytoplasm. Functionally, participates actively in the response to hyperosmotic and heat shock by preventing the aggregation of stress-denatured proteins, in association with DnaK and GrpE. It is the nucleotide exchange factor for DnaK and may function as a thermosensor. Unfolded proteins bind initially to DnaJ; upon interaction with the DnaJ-bound protein, DnaK hydrolyzes its bound ATP, resulting in the formation of a stable complex. GrpE releases ADP from DnaK; ATP binding to DnaK triggers the release of the substrate protein, thus completing the reaction cycle. Several rounds of ATP-dependent interactions between DnaJ, DnaK and GrpE are required for fully efficient folding. The chain is Protein GrpE from Rhodopseudomonas palustris (strain TIE-1).